The sequence spans 387 residues: Zinc transporter 7 (387 aa).

Residues 1–37 lie on the Cytoplasmic side of the membrane; sequence MLPLSIKDDEYKPAKFNLVVKLSGWFRSILADKTSRN. Residues 38-58 traverse the membrane as a helical segment; that stretch reads LFFFLCLNLSFAFVELLYGIW. Residues 59–67 are Lumenal-facing; that stretch reads SNSLGLISD. A helical membrane pass occupies residues 68-88; that stretch reads SFHMFFDCTALLAGLAASVIS. At 89–102 the chain is on the cytoplasmic side; sequence RWRSNDSFSYGYVR. Residues 103–123 form a helical membrane-spanning segment; that stretch reads AEVLAGFVNGLFLIFTAFFIF. The Lumenal segment spans residues 124–140; that stretch reads SEGVERALEPPDVHHDR. Residues 141–161 form a helical membrane-spanning segment; that stretch reads LLPVSIAGLLVNLVGIFVFQH. A his-rich loop region spans residues 161–232; that stretch reads HGGHGHSHGG…HDDQHCHDDH (72 aa). Topologically, residues 162–247 are cytoplasmic; the sequence is GGHGHSHGGD…KGSSKQILQG (86 aa). Residues 167–237 are disordered; sequence SHGGDDHGHS…CHDDHTLTPG (71 aa). Over residues 187 to 201 the composition is skewed to basic residues; that stretch reads GHSHGGHGHSHGGHG. Composition is skewed to basic and acidic residues over residues 202–214 and 221–233; these read HSHESKHGHDHGH and HSHDDQHCHDDHT. The helical transmembrane segment at 248–268 threads the bilayer; it reads VFLHIVADTLGSVGVIISAIL. Residues 269–273 lie on the Lumenal side of the membrane; that stretch reads MQKYD. Residues 274 to 294 traverse the membrane as a helical segment; it reads LMIADPICSMLIALLIGVSVV. At 295–387 the chain is on the cytoplasmic side; sequence PLLRESIGIL…LYVQIEVAAM (93 aa).

Belongs to the cation diffusion facilitator (CDF) transporter (TC 2.A.4) family. SLC30A subfamily. As to quaternary structure, homooligomer.

Its subcellular location is the golgi apparatus membrane. The protein resides in the cytoplasmic vesicle. It localises to the golgi apparatus. It is found in the trans-Golgi network. The protein localises to the sarcoplasmic reticulum. Its subcellular location is the mitochondrion. It catalyses the reaction Zn(2+)(in) = Zn(2+)(out). Functionally, zinc ion transporter mediating zinc entry from the cytosol into the lumen of organelles along the secretory pathway. By contributing to zinc ion homeostasis within the early secretory pathway, regulates the activation and folding of enzymes like alkaline phosphatases. This chain is Zinc transporter 7 (slc30a7), found in Danio rerio (Zebrafish).